Consider the following 304-residue polypeptide: UDP-N-acetylenolpyruvoylglucosamine reductase (304 aa).

Residues 33 to 213 form the FAD-binding PCMH-type domain; the sequence is IGGPADIMVI…LEITRDLTER (181 aa). Arg-177 is an active-site residue. Residue Ser-227 is the Proton donor of the active site. Glu-297 is a catalytic residue.

This sequence belongs to the MurB family. The cofactor is FAD.

Its subcellular location is the cytoplasm. The catalysed reaction is UDP-N-acetyl-alpha-D-muramate + NADP(+) = UDP-N-acetyl-3-O-(1-carboxyvinyl)-alpha-D-glucosamine + NADPH + H(+). The protein operates within cell wall biogenesis; peptidoglycan biosynthesis. Its function is as follows. Cell wall formation. The chain is UDP-N-acetylenolpyruvoylglucosamine reductase from Alkaliphilus oremlandii (strain OhILAs) (Clostridium oremlandii (strain OhILAs)).